The chain runs to 60 residues: Phospholipase A2 (60 aa).

Residues Y27, G29, and G31 each contribute to the Ca(2+) site. C28 and C44 are oxidised to a cystine. Residue H47 is part of the active site. Ca(2+) is bound at residue D48.

Ca(2+) is required as a cofactor. Expressed by the venom gland.

It is found in the secreted. The enzyme catalyses a 1,2-diacyl-sn-glycero-3-phosphocholine + H2O = a 1-acyl-sn-glycero-3-phosphocholine + a fatty acid + H(+). Snake venom phospholipase A2 (PLA2) that displays mild but significant inhibition of mouse platelet aggregation induced by ADP and collagen. In vivo, induces edema in the foot pads and gastrocnemius muscles of mice but shows no myonecrotic or myotoxic activity. PA2 catalyzes the calcium-dependent hydrolysis of the 2-acyl groups in 3-sn-phosphoglycerides. This chain is Phospholipase A2, found in Lachesis muta rhombeata (Bushmaster).